Reading from the N-terminus, the 214-residue chain is Ribonuclease T (214 aa).

An Exonuclease domain is found at 20–195; it reads VVVDVETAGF…YDTQKTAELF (176 aa). Residues aspartate 23, glutamate 25, histidine 182, and aspartate 187 each contribute to the Mg(2+) site. The active-site Proton donor/acceptor is the histidine 182.

The protein belongs to the RNase T family. As to quaternary structure, homodimer. The cofactor is Mg(2+).

Trims short 3' overhangs of a variety of RNA species, leaving a one or two nucleotide 3' overhang. Responsible for the end-turnover of tRNA: specifically removes the terminal AMP residue from uncharged tRNA (tRNA-C-C-A). Also appears to be involved in tRNA biosynthesis. The chain is Ribonuclease T from Vibrio parahaemolyticus serotype O3:K6 (strain RIMD 2210633).